A 117-amino-acid polypeptide reads, in one-letter code: UPF0342 protein lwe2240 (117 aa).

It belongs to the UPF0342 family.

The sequence is that of UPF0342 protein lwe2240 from Listeria welshimeri serovar 6b (strain ATCC 35897 / DSM 20650 / CCUG 15529 / CIP 8149 / NCTC 11857 / SLCC 5334 / V8).